The chain runs to 226 residues: ATP synthase F(0) complex subunit a (226 aa).

6 helical membrane-spanning segments follow: residues 10–30 (ITPT…PPVI), 68–88 (WSLM…LGLL), 97–117 (QLSM…ILGF), 138–158 (IPML…ALAV), 164–184 (ITAG…LTSI), and 189–209 (AMIT…VALI).

Belongs to the ATPase A chain family. As to quaternary structure, component of the ATP synthase complex composed at least of ATP5F1A/subunit alpha, ATP5F1B/subunit beta, ATP5MC1/subunit c (homooctomer), MT-ATP6/subunit a, MT-ATP8/subunit 8, ATP5ME/subunit e, ATP5MF/subunit f, ATP5MG/subunit g, ATP5MK/subunit k, ATP5MJ/subunit j, ATP5F1C/subunit gamma, ATP5F1D/subunit delta, ATP5F1E/subunit epsilon, ATP5PF/subunit F6, ATP5PB/subunit b, ATP5PD/subunit d, ATP5PO/subunit OSCP. ATP synthase complex consists of a soluble F(1) head domain (subunits alpha(3) and beta(3)) - the catalytic core - and a membrane F(0) domain - the membrane proton channel (subunits c, a, 8, e, f, g, k and j). These two domains are linked by a central stalk (subunits gamma, delta, and epsilon) rotating inside the F1 region and a stationary peripheral stalk (subunits F6, b, d, and OSCP). Interacts with DNAJC30; interaction is direct.

It is found in the mitochondrion inner membrane. It catalyses the reaction H(+)(in) = H(+)(out). Its function is as follows. Subunit a, of the mitochondrial membrane ATP synthase complex (F(1)F(0) ATP synthase or Complex V) that produces ATP from ADP in the presence of a proton gradient across the membrane which is generated by electron transport complexes of the respiratory chain. ATP synthase complex consist of a soluble F(1) head domain - the catalytic core - and a membrane F(1) domain - the membrane proton channel. These two domains are linked by a central stalk rotating inside the F(1) region and a stationary peripheral stalk. During catalysis, ATP synthesis in the catalytic domain of F(1) is coupled via a rotary mechanism of the central stalk subunits to proton translocation. With the subunit c (ATP5MC1), forms the proton-conducting channel in the F(0) domain, that contains two crucial half-channels (inlet and outlet) that facilitate proton movement from the mitochondrial intermembrane space (IMS) into the matrix. Protons are taken up via the inlet half-channel and released through the outlet half-channel, following a Grotthuss mechanism. In Cricetulus griseus (Chinese hamster), this protein is ATP synthase F(0) complex subunit a.